The sequence spans 510 residues: Ent-sandaracopimaradiene 3-hydroxylase (510 aa).

The chain crosses the membrane as a helical span at residues 4–24 (MLVAGAGAAAVAAVGGLVAAA). A heme-binding site is contributed by C454.

Belongs to the cytochrome P450 family. In terms of assembly, interacts with the rice dwarf virus (RDV) P2 protein. The cofactor is heme. Expressed in leaf blades and sheaths, stems and panicles.

It localises to the membrane. It catalyses the reaction ent-sandaracopimara-8(14),15-diene + reduced [NADPH--hemoprotein reductase] + O2 = ent-sandaracopimaradien-3beta-ol + oxidized [NADPH--hemoprotein reductase] + H2O + H(+). The catalysed reaction is 9beta-pimara-7,15-diene + reduced [NADPH--hemoprotein reductase] + O2 = 9beta-pimara-7,15-diene-3beta-ol + oxidized [NADPH--hemoprotein reductase] + H2O + H(+). Its function is as follows. Catalyzes the hydroxylation of ent-sandaracopimaradiene at the C3alpha position to produce ent-3beta-hydroxy-sandaracopimaradiene, an intermediates for the biosynthesis of oryzalexin D and oryzalexin E phytoalexins. Catalyzes the hydroxylation of ent-cassadiene at the C3alpha position to produce 3alpha-hydroxy-ent-cassadiene, which may be an intermediate for the biosynthesis of phytocassane phytoalexins. Catalyzes the hydroxylation of syn-pimaradiene (9-beta-pimara-7,15-diene) at the C3beta position to produce 3-beta-syn-pimaradiene. Can hydroxylate ent-kaurene in vitro, but the product is not ent-kauren-19-ol as expected for ent-kaurene oxidase activity. The chain is Ent-sandaracopimaradiene 3-hydroxylase from Oryza sativa subsp. japonica (Rice).